The following is a 1579-amino-acid chain: Eukaryotic translation initiation factor 4 gamma 3 (1579 aa).

Disordered regions lie at residues 1-35 and 128-326; these read MNSQ…RPGV and TQQQ…GPSL. The span at 10-25 shows a compositional bias: low complexity; sequence PFFQRPQIQPPRAAIP. The segment covering 26–35 has biased composition (polar residues); sequence NSSPSIRPGV. The interval 134-162 is PABPC1-binding; sequence PAKREKKTIRIRDPNQGGKDITEEIMSGG. Over residues 167–183 the composition is skewed to pro residues; sequence PTPPIGRPASTPTPPQQ. Thr168 is modified (phosphothreonine). Phosphoserine is present on residues Ser230, Ser232, and Ser267. A compositionally biased stretch (low complexity) spans 266 to 292; it reads SSPTSLPPLARSSLPSPMSAALSSQPL. A compositionally biased stretch (basic and acidic residues) spans 295–308; it reads AEDKCELPSSKEED. Over residues 315–326 the composition is skewed to polar residues; it reads PTSCTAASGPSL. Ser436, Ser470, Ser472, and Ser490 each carry phosphoserine. Residues 454–470 show a composition bias toward basic and acidic residues; sequence RTCLSKDAKEMQDKAES. 3 disordered regions span residues 454–615, 681–706, and 724–744; these read RTCL…DTEG, RQTP…QRRE, and AENA…PESI. The segment covering 471–480 has biased composition (acidic residues); the sequence is ESDGQAEETA. The span at 481–501 shows a compositional bias: polar residues; that stretch reads DPQSLHSGRSPAPVQTATTAP. Basic and acidic residues-rich tracts occupy residues 506 to 515 and 549 to 563; these read KTKEQTRTPD and SERD…KAEE. The segment covering 589–598 has biased composition (low complexity); that stretch reads SGSADSSADG. Residues 606–615 show a composition bias toward basic and acidic residues; that stretch reads ESWKPADTEG. Residues 614–625 are EIF4E-binding; sequence EGKKQYDREFLL. Residues 694-1014 are eIF3/EIF4A-binding; that stretch reads VGPRRSQPGQ…EQRKVQQLMT (321 aa). 5 HEAT repeats span residues 740 to 778, 779 to 826, 827 to 900, 901 to 939, and 940 to 979; these read DPES…LTVD, TEER…GNTV, NFRK…LKML, TEAI…DFEK, and AKPR…LCNW. The MIF4G domain occupies 750 to 978; it reads FRKVRSILNK…QDVIDLRLCN (229 aa). Positions 855–871 are enriched in basic and acidic residues; the sequence is KELEAASAPEERTRLHD. Residues 855–875 are disordered; sequence KELEAASAPEERTRLHDELEE. Residues 989–1018 adopt a coiled-coil conformation; that stretch reads KTIEQIHKEAKIEEQEEQRKVQQLMTKEKR. Disordered regions lie at residues 1009–1037 and 1067–1214; these read VQQL…QGAK and LGSW…LSEE. A compositionally biased stretch (low complexity) spans 1086 to 1098; the sequence is LRSSASSLNRFSP. Ser1150 carries the phosphoserine; by CaMK1 modification. 2 stretches are compositionally biased toward basic and acidic residues: residues 1150 to 1169 and 1179 to 1197; these read SSKD…EMLE and DAER…ELAK. The stretch at 1154-1176 forms a coiled coil; that stretch reads LLDNQSQEEQRREMLETVKQLTG. A Phosphoserine modification is found at Ser1212. Positions 1215–1337 constitute an MI domain; it reads EVERKSKSII…SMRELIVEFS (123 aa). A coiled-coil region spans residues 1406–1438; that stretch reads SSEALSKKELSAEELSQRLEKLIMEEKADDERI. Positions 1410 to 1579 constitute a W2 domain; the sequence is LSKKELSAEE…REAEEESEDN (170 aa). An EIF4A-binding region spans residues 1427–1579; sequence LIMEEKADDE…REAEEESEDN (153 aa). Residues 1565–1579 form a necessary but not sufficient for MKNK1-binding region; it reads FFTWLREAEEESEDN.

It belongs to the eukaryotic initiation factor 4G family. Interacts with EIF4A, EIF4E, eIF3 and PABPC1. Part of a complex with EIF4E. eIF4F is a multi-subunit complex, the composition of which varies with external and internal environmental conditions. It is composed of at least EIF4A, EIF4E and EIF4G1/EIF4G3. EIF4G1/EIF4G3 interacts through its C-terminus with the serine/threonine kinases MKNK1, and with MKNK2. Appears to act as a scaffold protein, holding these enzymes in place to phosphorylate eIF4E. Non-phosphorylated EIF4EBP1 competes with EIF4G1/EIFG3 to interact with EIF4E; insulin stimulated MAP-kinase (MAPK1 and MAPK3) phosphorylation of EIF4EBP1 causes dissociation of the complex allowing EIF4G1/EIF4G3 to bind and consequent initiation of translation. EIF4G1/EIF4G3 interacts with PABPC1 to bring about circularization of the mRNA. Interacts with FXR1; promoting translation of FXR1 target mRNAs.

Functionally, component of the protein complex eIF4F, which is involved in the recognition of the mRNA cap, ATP-dependent unwinding of 5'-terminal secondary structure and recruitment of mRNA to the ribosome. Functional homolog of EIF4G1. The polypeptide is Eukaryotic translation initiation factor 4 gamma 3 (Eif4g3) (Mus musculus (Mouse)).